The following is a 934-amino-acid chain: Bifunctional uridylyltransferase/uridylyl-removing enzyme (934 aa).

The interval methionine 1–serine 379 is uridylyltransferase. The segment at aspartate 380–threonine 736 is uridylyl-removing. The region spanning valine 496–methionine 613 is the HD domain. 2 ACT domains span residues glutamate 737–alanine 818 and valine 848–glutamine 931.

Belongs to the GlnD family. It depends on Mg(2+) as a cofactor.

It catalyses the reaction [protein-PII]-L-tyrosine + UTP = [protein-PII]-uridylyl-L-tyrosine + diphosphate. The catalysed reaction is [protein-PII]-uridylyl-L-tyrosine + H2O = [protein-PII]-L-tyrosine + UMP + H(+). Uridylyltransferase (UTase) activity is inhibited by glutamine, while glutamine activates uridylyl-removing (UR) activity. Functionally, modifies, by uridylylation and deuridylylation, the PII regulatory proteins (GlnB and homologs), in response to the nitrogen status of the cell that GlnD senses through the glutamine level. Under low glutamine levels, catalyzes the conversion of the PII proteins and UTP to PII-UMP and PPi, while under higher glutamine levels, GlnD hydrolyzes PII-UMP to PII and UMP (deuridylylation). Thus, controls uridylylation state and activity of the PII proteins, and plays an important role in the regulation of nitrogen assimilation and metabolism. The chain is Bifunctional uridylyltransferase/uridylyl-removing enzyme from Brucella suis (strain ATCC 23445 / NCTC 10510).